The following is a 366-amino-acid chain: Growth hormone secretagogue receptor type 1 (366 aa).

The Extracellular segment spans residues 1-40 (MWNATLSEEPGYNLTLPDLGWDAPADNDSLTDELLPLFPA). 3 N-linked (GlcNAc...) asparagine glycosylation sites follow: Asn-3, Asn-13, and Asn-27. A helical transmembrane segment spans residues 41-66 (PLLAGVTATCVALFVVGIAGNLLTML). Over 67-72 (VVSRFR) the chain is Cytoplasmic. Residues 73 to 96 (ELRTTTNLYLSSMAFSDLLIFLCM) traverse the membrane as a helical segment. Residues 97–117 (PLDLVRLWQYRPWNFGDLLCK) are Extracellular-facing. A disulfide bond links Cys-116 and Cys-198. The helical transmembrane segment at 118–139 (LFQFVSESCTYATVLTITALSV) threads the bilayer. Over 140–162 (ERYFAICFPLRAKVVVTKGRVKL) the chain is Cytoplasmic. The helical transmembrane segment at 163 to 183 (VILVIWAVAFCSAGPIFVLVG) threads the bilayer. Topologically, residues 184–211 (VEHENGTDPRDTNECRATEFAVRSGLLT) are extracellular. Asn-188 is a glycosylation site (N-linked (GlcNAc...) asparagine). A helical transmembrane segment spans residues 212–235 (VMVWVSSVFFFLPVFCLTVLYSLI). The Cytoplasmic portion of the chain corresponds to 236–263 (GRKLWRRKRGEAAVGASLRDQNHKQTVK). Residues 264–285 (MLAVVVFAFILCWLPFHVGRYL) traverse the membrane as a helical segment. The Extracellular segment spans residues 286-302 (FSKSFEPGSLEIAQISQ). A helical transmembrane segment spans residues 303-326 (YCNLVSFVLFYLSAAINPILYNIM). Topologically, residues 327–366 (SKKYRVAVFKLLGFEPFSQRKLSTLKDESSRAWTETSINT) are cytoplasmic.

It belongs to the G-protein coupled receptor 1 family.

The protein localises to the cell membrane. Functionally, receptor for ghrelin, coupled to G-alpha-11 proteins. Stimulates growth hormone secretion. Also binds other growth hormone releasing peptides (GHRP) (e.g. Met-enkephalin and GHRP-6) as well as non-peptide, low molecular weight secretagogues (e.g. L-692,429, MK-0677, adenosine). This is Growth hormone secretagogue receptor type 1 (GHSR) from Mustela putorius furo (European domestic ferret).